The sequence spans 775 residues: WD repeat-containing protein pop1 (775 aa).

In terms of domain architecture, F-box spans 298–345 (KNFLTGFPAEITNLVLTHLDAPSLCAVSQVSHHWYKLVSSNEELWKSL). WD repeat units lie at residues 444-472 (EHEG…RVWD), 484-538 (GHTS…RLWS), 575-603 (GHTD…RVWK), 615-645 (GHVG…RIWN), and 657-687 (GHSN…RVWD).

As to quaternary structure, homodimer and heterodimer with pop2. Binds to cdc18, phosphorylated cig2, cul1, pip1 and skp1.

It is found in the nucleus. In terms of biological role, involved in maintenance of ploidy through proteasome dependent degradation of CDK inhibitor rum1 and S-phase initiator cdc18. Functions as a recognition factor for rum1 and cdc18, which are subsequently ubiquitinated and targeted to the 26S proteasome for degradation. Together with pop2, required for cig2 instability during G2 and M phase and cig2 degradation in exponentially growing cells. Regulates cell-cycle progression under starvation through the rum1 protein. The protein is WD repeat-containing protein pop1 (pop1) of Schizosaccharomyces pombe (strain 972 / ATCC 24843) (Fission yeast).